We begin with the raw amino-acid sequence, 602 residues long: Peptide-N(4)-(N-acetyl-beta-glucosaminyl)asparagine amidase (602 aa).

Residues 2-130 enclose the Thioredoxin domain; sequence PVREVSRLPE…EKKFLERFVG (129 aa). Zn(2+)-binding residues include Cys189, Cys192, Cys222, and Cys225. The active-site Nucleophile is the Cys248. Catalysis depends on residues His275 and Asp292. The PAW domain occupies 400–602; the sequence is DMGGRTTGSK…ESMVVRVYMK (203 aa).

It belongs to the transglutaminase-like superfamily. PNGase family. The cofactor is Zn(2+).

It localises to the cytoplasm. The protein resides in the endoplasmic reticulum. The enzyme catalyses Hydrolysis of an N(4)-(acetyl-beta-D-glucosaminyl)asparagine residue in which the glucosamine residue may be further glycosylated, to yield a (substituted) N-acetyl-beta-D-glucosaminylamine and a peptide containing an aspartate residue.. Functionally, specifically deglycosylates the denatured form of N-linked glycoproteins in the cytoplasm and assists their proteasome-mediated degradation. Cleaves the beta-aspartyl-glucosamine (GlcNAc) of the glycan and the amide side chain of Asn, converting Asn to Asp. Prefers proteins containing high-mannose over those bearing complex type oligosaccharides. Can recognize misfolded proteins in the endoplasmic reticulum that are exported to the cytosol to be destroyed and deglycosylate them, while it has no activity toward native proteins. Deglycosylation is a prerequisite for subsequent proteasome-mediated degradation of some, but not all, misfolded glycoproteins. Also displays oxidoreductase (thioredoxin) activity. The sequence is that of Peptide-N(4)-(N-acetyl-beta-glucosaminyl)asparagine amidase (png-1) from Caenorhabditis briggsae.